The primary structure comprises 374 residues: Heme A synthase (374 aa).

The interval M1–H22 is disordered. The next 5 helical transmembrane spans lie at I32 to G52, R118 to T138, L149 to S169, V184 to V204, and L226 to L246. H281 is a binding site for heme. 3 helical membrane passes run L283–F300, A309–L329, and V332–I352. Residue H340 participates in heme binding.

This sequence belongs to the COX15/CtaA family. Type 2 subfamily. Interacts with CtaB. Heme b is required as a cofactor.

The protein resides in the cell membrane. It carries out the reaction Fe(II)-heme o + 2 A + H2O = Fe(II)-heme a + 2 AH2. It participates in porphyrin-containing compound metabolism; heme A biosynthesis; heme A from heme O: step 1/1. Functionally, catalyzes the conversion of heme O to heme A by two successive hydroxylations of the methyl group at C8. The first hydroxylation forms heme I, the second hydroxylation results in an unstable dihydroxymethyl group, which spontaneously dehydrates, resulting in the formyl group of heme A. The chain is Heme A synthase from Granulibacter bethesdensis (strain ATCC BAA-1260 / CGDNIH1).